Here is a 246-residue protein sequence, read N- to C-terminus: DNA repair protein RecO (246 aa).

It belongs to the RecO family.

In terms of biological role, involved in DNA repair and RecF pathway recombination. This chain is DNA repair protein RecO, found in Proteus mirabilis (strain HI4320).